Consider the following 449-residue polypeptide: Putative methylthiotransferase MJ0865 (449 aa).

One can recognise a Radical SAM core domain in the interval 163 to 390 (SIRGANVYIE…EGEYRKLGLS (228 aa)). Positions 177, 181, and 184 each coordinate [4Fe-4S] cluster.

The protein belongs to the methylthiotransferase family. Requires [4Fe-4S] cluster as cofactor.

This is Putative methylthiotransferase MJ0865 from Methanocaldococcus jannaschii (strain ATCC 43067 / DSM 2661 / JAL-1 / JCM 10045 / NBRC 100440) (Methanococcus jannaschii).